A 255-amino-acid chain; its full sequence is tRNA (guanine-N(1)-)-methyltransferase (255 aa).

S-adenosyl-L-methionine contacts are provided by residues glycine 119 and 139-144 (IGDFIL).

Belongs to the RNA methyltransferase TrmD family. In terms of assembly, homodimer.

It localises to the cytoplasm. It carries out the reaction guanosine(37) in tRNA + S-adenosyl-L-methionine = N(1)-methylguanosine(37) in tRNA + S-adenosyl-L-homocysteine + H(+). In terms of biological role, specifically methylates guanosine-37 in various tRNAs. The protein is tRNA (guanine-N(1)-)-methyltransferase of Pseudoalteromonas translucida (strain TAC 125).